A 460-amino-acid chain; its full sequence is Bifunctional protein GlmU (460 aa).

A pyrophosphorylase region spans residues 1–229 (MSHYAIILAA…FEESLGVNDR (229 aa)). Residues 8–11 (LAAG), Lys-22, Gln-72, and 77–78 (GT) contribute to the UDP-N-acetyl-alpha-D-glucosamine site. Asp-102 contacts Mg(2+). Gly-139, Glu-154, Asn-169, and Asn-227 together coordinate UDP-N-acetyl-alpha-D-glucosamine. Asn-227 contributes to the Mg(2+) binding site. A linker region spans residues 230 to 250 (VALATAEDVMRRRINKAHMIN). Residues 251–460 (GVTFQNPNAT…KKPHHPSQQK (210 aa)) are N-acetyltransferase. Residues Arg-332 and Lys-350 each coordinate UDP-N-acetyl-alpha-D-glucosamine. His-362 serves as the catalytic Proton acceptor. Positions 365 and 376 each coordinate UDP-N-acetyl-alpha-D-glucosamine. Acetyl-CoA contacts are provided by residues Ala-379, 385–386 (NY), Ser-404, Ala-422, and Arg-439.

It in the N-terminal section; belongs to the N-acetylglucosamine-1-phosphate uridyltransferase family. In the C-terminal section; belongs to the transferase hexapeptide repeat family. As to quaternary structure, homotrimer. It depends on Mg(2+) as a cofactor.

The protein localises to the cytoplasm. The catalysed reaction is alpha-D-glucosamine 1-phosphate + acetyl-CoA = N-acetyl-alpha-D-glucosamine 1-phosphate + CoA + H(+). It carries out the reaction N-acetyl-alpha-D-glucosamine 1-phosphate + UTP + H(+) = UDP-N-acetyl-alpha-D-glucosamine + diphosphate. Its pathway is nucleotide-sugar biosynthesis; UDP-N-acetyl-alpha-D-glucosamine biosynthesis; N-acetyl-alpha-D-glucosamine 1-phosphate from alpha-D-glucosamine 6-phosphate (route II): step 2/2. It functions in the pathway nucleotide-sugar biosynthesis; UDP-N-acetyl-alpha-D-glucosamine biosynthesis; UDP-N-acetyl-alpha-D-glucosamine from N-acetyl-alpha-D-glucosamine 1-phosphate: step 1/1. The protein operates within bacterial outer membrane biogenesis; LPS lipid A biosynthesis. In terms of biological role, catalyzes the last two sequential reactions in the de novo biosynthetic pathway for UDP-N-acetylglucosamine (UDP-GlcNAc). The C-terminal domain catalyzes the transfer of acetyl group from acetyl coenzyme A to glucosamine-1-phosphate (GlcN-1-P) to produce N-acetylglucosamine-1-phosphate (GlcNAc-1-P), which is converted into UDP-GlcNAc by the transfer of uridine 5-monophosphate (from uridine 5-triphosphate), a reaction catalyzed by the N-terminal domain. In Streptococcus thermophilus (strain CNRZ 1066), this protein is Bifunctional protein GlmU.